A 146-amino-acid chain; its full sequence is Putative esterase DR_2321 (146 aa).

This sequence belongs to the thioesterase PaaI family.

In Deinococcus radiodurans (strain ATCC 13939 / DSM 20539 / JCM 16871 / CCUG 27074 / LMG 4051 / NBRC 15346 / NCIMB 9279 / VKM B-1422 / R1), this protein is Putative esterase DR_2321.